The primary structure comprises 367 residues: Voltage-gated potassium channel subunit beta-2 (367 aa).

NADP(+) contacts are provided by Thr-56, Trp-57, Gln-63, and Asp-85. Tyr-90 (proton donor/acceptor) is an active-site residue. NADP(+)-binding residues include Asn-158, Ser-188, Arg-189, Gln-214, Trp-243, Ser-244, Pro-245, Leu-246, Ala-247, Cys-248, Lys-254, Tyr-262, Arg-264, Gly-323, Ser-325, Gln-329, Glu-332, and Asn-333.

It belongs to the shaker potassium channel beta subunit family. In terms of assembly, forms heteromultimeric complex with alpha subunits.

The protein localises to the cytoplasm. It localises to the membrane. Its subcellular location is the cell membrane. It is found in the cell projection. The protein resides in the axon. The protein localises to the synapse. It localises to the synaptosome. Its subcellular location is the cytoskeleton. In terms of biological role, regulatory subunit of the voltage-gated potassium (Kv) Shaker channels composed of pore-forming and potassium-conducting alpha subunits and of regulatory beta subunits. The beta-2/KCNAB2 cytoplasmic subunit may promote potassium channel closure via a mechanism that does not involve physical obstruction of the channel pore. Enhances current amplitude of Kv1.1/KCNA1 and Kv2.2/KCNA2 channels. May display nicotinamide adenine dinucleotide phosphate (NADPH)-dependent aldoketoreductase activity by catalyzing the NADPH-dependent reduction of a wide range of aldehyde and ketone substrates. The binding of oxidized and reduced nucleotide may alter Kv channel gating and contribute to dynamic fine tuning of cell excitability. This is Voltage-gated potassium channel subunit beta-2 (kcnab2) from Xenopus laevis (African clawed frog).